Reading from the N-terminus, the 751-residue chain is Pyridoxal-dependent decarboxylase domain-containing protein 1 (751 aa).

The disordered stretch occupies residues 659 to 751; the sequence is QMRKEDSPDS…QEAESVETIR (93 aa). Residues 690 to 702 are compositionally biased toward polar residues; it reads DSISETSSVSQLE. Residues 720-729 show a composition bias toward basic and acidic residues; it reads PQERPAHILE. The segment covering 742–751 has biased composition (acidic residues); the sequence is QEAESVETIR.

Belongs to the group II decarboxylase family. Pyridoxal 5'-phosphate serves as cofactor.

The protein is Pyridoxal-dependent decarboxylase domain-containing protein 1 (pdxdc1) of Danio rerio (Zebrafish).